Here is a 505-residue protein sequence, read N- to C-terminus: Zinc finger protein 649 (505 aa).

The KRAB domain occupies 8–79; sequence LTLEDVAVDF…EDEIHSPAHP (72 aa). Lys-112 is covalently cross-linked (Glycyl lysine isopeptide (Lys-Gly) (interchain with G-Cter in SUMO2)). 10 consecutive C2H2-type zinc fingers follow at residues 178 to 200, 206 to 228, 234 to 256, 262 to 284, 290 to 312, 318 to 340, 346 to 368, 374 to 396, 402 to 424, and 430 to 452; these read HECT…KRIH, HVCS…ERAH, HGCS…ERAH, YGCS…QRIH, HQCS…QRTH, HTCS…QRTH, YGCI…QRYH, FVCP…QKIH, YKCS…HRTH, and YGCD…KRIH. The interval 455-481 is disordered; the sequence is EKRGDSVKVENPSTASHSLSPSEHVQG. Over residues 465–477 the composition is skewed to polar residues; it reads NPSTASHSLSPSE.

It belongs to the krueppel C2H2-type zinc-finger protein family. In terms of tissue distribution, highly expressed in heart, skeletal muscle, and brain. Lower expression in liver, lung, kidney, pancreas and placenta.

The protein resides in the nucleus. Its function is as follows. Transcriptional repressor. Regulator of transcriptional factor complexes and may suppress SRE and AP-1 transcription activities mediated by growth factor signaling pathways. This Homo sapiens (Human) protein is Zinc finger protein 649 (ZNF649).